Reading from the N-terminus, the 589-residue chain is Vesicular glutamate transporter 3 (589 aa).

The Cytoplasmic portion of the chain corresponds to 1–76; sequence MPFKAFDTFK…CHCCGLPKRY (76 aa). The segment covering 40 to 49 has biased composition (acidic residues); the sequence is TEEEDNIELN. Residues 40-61 are disordered; the sequence is TEEEDNIELNEEGRPVQTSRPS. Residues 77–97 traverse the membrane as a helical segment; sequence IIAIMSGLGFCISFGIRCNLG. The Vesicular segment spans residues 98–130; the sequence is VAIVEMVNNSTVYVDGKPEIQTAQFNWDPETVG. A glycan (N-linked (GlcNAc...) asparagine) is linked at N106. The chain crosses the membrane as a helical span at residues 131-151; the sequence is LIHGSFFWGYIMTQIPGGFIS. At 152–153 the chain is on the cytoplasmic side; that stretch reads NK. Residues 154 to 174 traverse the membrane as a helical segment; sequence FAANRVFGAAIFLTSTLNMFI. The Vesicular portion of the chain corresponds to 175–182; that stretch reads PSAARVHY. A helical transmembrane segment spans residues 183–203; the sequence is GCVMCVRILQGLVEGVTYPAC. The Cytoplasmic portion of the chain corresponds to 204–221; that stretch reads HGMWSKWAPPLERSRLAT. A helical membrane pass occupies residues 222–242; the sequence is TSFCGSYAGAVVAMPLAGVLV. At 243–249 the chain is on the vesicular side; that stretch reads QYIGWSS. Residues 250-270 traverse the membrane as a helical segment; it reads VFYIYGMFGIIWYMFWLLQAY. At 271–314 the chain is on the cytoplasmic side; it reads ECPAAHPTISNEEKTYIETSIGEGANVVSLSKFSTPWKRFFTSL. The chain crosses the membrane as a helical span at residues 315 to 335; sequence PVYAIIVANFCRSWTFYLLLI. The Vesicular segment spans residues 336 to 353; that stretch reads SQPAYFEEVFGFAISKVG. A helical membrane pass occupies residues 354-374; sequence LLSAVPHMVMTIVVPIGGQLA. At 375–390 the chain is on the cytoplasmic side; the sequence is DYLRSRQILTTTAVRK. A helical membrane pass occupies residues 391–411; the sequence is IMNCGGFGMEATLLLVVGFSH. The Vesicular segment spans residues 412-413; it reads TK. A helical membrane pass occupies residues 414–434; it reads GVAISFLVLAVGFSGFAISGF. Residues 435 to 447 are Cytoplasmic-facing; the sequence is NVNHLDIAPRYAS. The helical transmembrane segment at 448 to 468 threads the bilayer; sequence ILMGISNGVGTLSGMVCPLIV. Residues 469–481 are Vesicular-facing; the sequence is GAMTRHKTREEWQ. The helical transmembrane segment at 482 to 502 threads the bilayer; that stretch reads NVFLIAALVHYSGVIFYGVFA. At 503–586 the chain is on the cytoplasmic side; it reads SGEKQEWADP…SYQNEERNFS (84 aa). Residues 559–589 form a disordered region; that stretch reads KKEWKGQRGATLDEEELTSYQNEERNFSTIS. Over residues 580 to 589 the composition is skewed to basic and acidic residues; that stretch reads NEERNFSTIS.

The protein belongs to the major facilitator superfamily. Sodium/anion cotransporter family. VGLUT subfamily. In terms of tissue distribution, expressed in amygdala, cerebellum, hippocampus, medulla, spinal cord and thalamus.

The protein localises to the cytoplasmic vesicle. It is found in the secretory vesicle. It localises to the synaptic vesicle membrane. The protein resides in the cell membrane. Its subcellular location is the synapse. The protein localises to the synaptosome. It carries out the reaction L-glutamate(out) = L-glutamate(in). The catalysed reaction is 3 Na(+)(out) + phosphate(out) = 3 Na(+)(in) + phosphate(in). The enzyme catalyses chloride(in) = chloride(out). The L-glutamate uniporter activity exhibits a biphasic dependence on chloride concentration. Chloride channel activity is allosterically activated by lumenal H(+) and Cl(-) leading to synaptic vesicles acidification. The glutamate transport activity is allosterically activated by lumenal H(+) and Cl(-), preventing non-vesicular L-glutamate release. Functionally, multifunctional transporter that transports L-glutamate as well as multiple ions such as chloride, sodium and phosphate. At the synaptic vesicle membrane, mainly functions as an uniporter that mediates the uptake of L-glutamate into synaptic vesicles at presynaptic nerve terminals of excitatory neural cells. The L-glutamate uniporter activity is electrogenic and is driven by the proton electrochemical gradient, mainly by the electrical gradient established by the vacuolar H(+)-ATPase across the synaptic vesicle membrane. In addition, functions as a chloride channel that allows a chloride permeation through the synaptic vesicle membrane that affects the proton electrochemical gradient and promotes synaptic vesicles acidification. At the plasma membrane, following exocytosis, functions as a symporter of Na(+) and phosphate from the extracellular space to the cytoplasm allowing synaptic phosphate homeostasis regulation. The symporter activity is electrogenic. Moreover, operates synergistically with SLC18A3/VACHT under a constant H(+) gradient, thereby allowing striatal vesicular acetylcholine uptake. The polypeptide is Vesicular glutamate transporter 3 (Homo sapiens (Human)).